We begin with the raw amino-acid sequence, 94 residues long: Integration host factor subunit beta (94 aa).

The protein belongs to the bacterial histone-like protein family. Heterodimer of an alpha and a beta chain.

This protein is one of the two subunits of integration host factor, a specific DNA-binding protein that functions in genetic recombination as well as in transcriptional and translational control. The polypeptide is Integration host factor subunit beta (Vibrio atlanticus (strain LGP32) (Vibrio splendidus (strain Mel32))).